A 179-amino-acid chain; its full sequence is Peptidyl-tRNA hydrolase (179 aa).

Y15 is a tRNA binding site. Catalysis depends on H20, which acts as the Proton acceptor. TRNA is bound by residues Y66, N68, and N114.

It belongs to the PTH family. In terms of assembly, monomer.

The protein localises to the cytoplasm. The enzyme catalyses an N-acyl-L-alpha-aminoacyl-tRNA + H2O = an N-acyl-L-amino acid + a tRNA + H(+). Hydrolyzes ribosome-free peptidyl-tRNAs (with 1 or more amino acids incorporated), which drop off the ribosome during protein synthesis, or as a result of ribosome stalling. In terms of biological role, catalyzes the release of premature peptidyl moieties from peptidyl-tRNA molecules trapped in stalled 50S ribosomal subunits, and thus maintains levels of free tRNAs and 50S ribosomes. The sequence is that of Peptidyl-tRNA hydrolase from Chlamydia trachomatis serovar L2b (strain UCH-1/proctitis).